We begin with the raw amino-acid sequence, 475 residues long: MGSIAKEEQPSTKVEKPTFSSKANTLEFAQSLDAKDHMRRFRDQYIIPSKANIKTKKLAKPGLSDEPSIYFCGNSLGLQPKCVQEYLQAHLDTWSSIAVHGHFRDLEDSPLTQWQLLAEHAAKQCAPIVGAKASEVAIMGTLTTNLHLLMASFYTPTPEKSKIIMEWKAFPSDHYAIESQIRGHGYNPEEAMVMIAPDEGSYEISTEKILRTIDEHASTTALLLLPGIQYYTGQLFDIKTITAYAQSKGLTVGWDLAHAAGNVPLQLHDWNVDFAVWCTYKYMNAGPGSIAGAYVHERHGEVDYSEGEEKPKYRHRLMGWYGGDQSCRFLMNNKFRPSPGASGYQVSNPSVVDLTSLCAALSIFNQTSMAEISQKTLHLTAYLEHLLLSTNSSDSPAFRIITPSDPSARGTQLSVLLKPGRLETLSDMLEEAGIVADKRKPDVIRVAPVPLYNTYEDVWNFVQIFNKALEKCEEA.

Pyridoxal 5'-phosphate contacts are provided by residues L142, T143, 170 to 173, D255, H258, and Y280; that span reads FPSD. At K281 the chain carries N6-(pyridoxal phosphate)lysine. 2 residues coordinate pyridoxal 5'-phosphate: W320 and N348.

The protein belongs to the kynureninase family. In terms of assembly, homodimer. Pyridoxal 5'-phosphate serves as cofactor.

The protein resides in the cytoplasm. The enzyme catalyses L-kynurenine + H2O = anthranilate + L-alanine + H(+). It catalyses the reaction 3-hydroxy-L-kynurenine + H2O = 3-hydroxyanthranilate + L-alanine + H(+). It functions in the pathway amino-acid degradation; L-kynurenine degradation; L-alanine and anthranilate from L-kynurenine: step 1/1. Its pathway is cofactor biosynthesis; NAD(+) biosynthesis; quinolinate from L-kynurenine: step 2/3. Its function is as follows. Catalyzes the cleavage of L-kynurenine (L-Kyn) and L-3-hydroxykynurenine (L-3OHKyn) into anthranilic acid (AA) and 3-hydroxyanthranilic acid (3-OHAA), respectively. The polypeptide is Kynureninase (bna5) (Botryotinia fuckeliana (strain B05.10) (Noble rot fungus)).